The chain runs to 235 residues: MSVISMKQLLEAGVHFGHQTRRWNPKMKKYIFTERNGIYIIDLQKTVKKVEEAYNFVKELAADGGKILFVGTKKQAQDSVKEEAERSGMFYVNQRWLGGTLTNFATIQKRIKRLKEIERMAEDGTFDVLPKKEVVKLKKELERLEKFLGGIKEMKELPDALFVIDPRKERIAVAEARKLNIPIIGIVDTNCDPDEIDYVIPANDDAIRAVKLLTSKIADAILEAKQGEEAVVTAE.

The protein belongs to the universal ribosomal protein uS2 family.

In Anoxybacillus flavithermus (strain DSM 21510 / WK1), this protein is Small ribosomal subunit protein uS2.